The chain runs to 257 residues: MQKLESRGVILFNRNYRENDKLVKIFTKQAGKRMFFVRGGGSGKLSAVIQPLNIAEFMMTVNDEGLSFIEDYSQAESFKEITSDIFKLSYATYLAALTDAAIADGVVDAELFAFLEKTLVLMEEGLDYEILTNIFEIQVLDRFGVRLNFHECVFCHRVGLPFDFSYKFSGLLCPNHYEEDERRSHLDPNVPYLLDRFQGLSFEELRSISVKDEMKRKLRQFIDELYDNYVGIHLKSKKFIDNLNSWGHIMSKEDNAD.

Belongs to the RecO family.

Functionally, involved in DNA repair and RecF pathway recombination. The protein is DNA repair protein RecO of Streptococcus thermophilus (strain ATCC BAA-491 / LMD-9).